The primary structure comprises 194 residues: tRNA (guanosine(18)-2'-O)-methyltransferase (194 aa).

S-adenosyl-L-methionine-binding positions include threonine 99, 122–126 (GAEKW), isoleucine 142, and leucine 151.

This sequence belongs to the class IV-like SAM-binding methyltransferase superfamily. RNA methyltransferase TrmH family. As to quaternary structure, monomer.

It catalyses the reaction guanosine(18) in tRNA + S-adenosyl-L-methionine = 2'-O-methylguanosine(18) in tRNA + S-adenosyl-L-homocysteine + H(+). With respect to regulation, stimulated by magnesium ions and spermine. Inhibited by S-adenosyl-homocysteine. In terms of biological role, catalyzes the 2'-O methylation of guanosine at position 18 in tRNA. The chain is tRNA (guanosine(18)-2'-O)-methyltransferase from Thermus thermophilus (strain ATCC BAA-163 / DSM 7039 / HB27).